Here is a 740-residue protein sequence, read N- to C-terminus: mRNA 3'-end-processing protein RNA14 (740 aa).

HAT repeat units lie at residues 48-78 (DKEE…YQLN), 80-114 (GEFQ…RTND), 121-156 (KARG…FLKA), 167-200 (QKTD…WENE), 236-268 (RREV…LERE), and 278-310 (SVQQ…FWLR). The segment at 381-418 (NRELNNKKQEENTGEENNNENDDSDNDDNDDDDSFKNP) is disordered. The segment covering 392-413 (NTGEENNNENDDSDNDDNDDDD) has biased composition (acidic residues). The stretch at 494 to 526 (DNLKTASKIFELGMKHFKKQGEFLLAYLDFLIM) is one HAT 7 repeat. Residues 668-688 (EFTPEVSNNNNQHTNNKDAVQ) form a disordered region. A compositionally biased stretch (polar residues) spans 672-688 (EVSNNNNQHTNNKDAVQ).

The protein resides in the nucleus. Its subcellular location is the cytoplasm. Component of the cleavage factor IA (CFIA) complex, which is involved in the endonucleolytic cleavage during polyadenylation-dependent pre-mRNA 3'-end formation. The polypeptide is mRNA 3'-end-processing protein RNA14 (RNA14) (Debaryomyces hansenii (strain ATCC 36239 / CBS 767 / BCRC 21394 / JCM 1990 / NBRC 0083 / IGC 2968) (Yeast)).